We begin with the raw amino-acid sequence, 382 residues long: Mannan endo-1,4-beta-mannosidase (382 aa).

The N-terminal stretch at 1–19 (MVKLFSFLLLVWVASPAFS) is a signal peptide. Substrate is bound by residues Trp-83, Asn-144, 147 to 151 (WDESK), and Asn-180. The Proton donor/acceptor role is filled by Glu-181. The substrate site is built by Gln-187, Gln-204, Trp-208, Trp-243, Tyr-282, and His-284. The cysteines at positions 195 and 262 are disulfide-linked. Glu-312 (nucleophile) is an active-site residue. Cys-317 and Cys-349 are joined by a disulfide. Positions 341 and 348 each coordinate substrate. Residues 346 to 350 (GGDCS) form an involved in stabilization of the transition state region.

Belongs to the glycosyl hydrolase 5 (cellulase A) family. As to quaternary structure, monomer.

Its subcellular location is the secreted. It catalyses the reaction Random hydrolysis of (1-&gt;4)-beta-D-mannosidic linkages in mannans, galactomannans and glucomannans.. Its activity is regulated as follows. Activated particularly by Ca(2+) and Zn(2+), and to a lesser extent by Na(+), K(+), Mg(2+) and Cu(2+). Activation effect of the divalent metal ions Ca(2+), Zn(2+), Mg(2+) and Cu(2+) is reduced significantly by the addition of EDTA. Strongly inhibited by Mn(2+), Hg(2+) and Ag(+). Functionally, hydrolyzes 1,4-beta linked polysaccharide backbones of mannans. Has high activity toward locust bean gum. Also active toward konjac and beta-1,4-mannan. Hydrolyzes mannotetraose (M4) and mannopentaose (M5) to mannobiose (M2) and mannotriose (M3) with a little production of mannose (M1). Hydrolyzes beta-1,4-mannan to M2, M3 and M4. Hardly hydrolyzes M2 and M3. Does not hydrolyze p-nitrophenyl-beta-D-mannopyranoside, gua-gum, carboxymethyl cellulose, soluble starch or laminarin. The chain is Mannan endo-1,4-beta-mannosidase from Cryptopygus antarcticus (Antarctic springtail).